Reading from the N-terminus, the 453-residue chain is MKKIMEYLQHYINQYPHRLALVFEDRHLTYGELSKEIYQASMRYKEVKLNEKVGLMDDHPVNNIINYFAVHQRGGIPCIFNHQWSNERIHQLVKSYDIQWLIKDNHLTLNHDDSIYNDEVIPRNVIHIGFTSGTTGLPKAFYRNEHSWIVSFKENEKLLQHCEETIVAPGPLSHSLSLYACIYALSTGKTFIGQKNFNPLSLMRLINQLNKATAIFVVPTMVQQLISTQRHCSSIKSILSSGAKLTLQQFQQISTLYPQANLIEFFGTSEASFISYNFNQSSPAHSVGKLFPHVETRLLNQDDDAVGLLAVRSEMVFSGYVGQSNQEGSWIKTGDFAYIKNQHLFLVGRESDRIIVGGINVYPTAIESLIMDIEGIDEALVIGIPHAKFGEIAILLYSGKVQLNYRQIKSFLMKQLSRQEVPSKLKKIDHMIYTESGKIARKEMKNKFINGEL.

Belongs to the ATP-dependent AMP-binding enzyme family.

The polypeptide is Putative long chain fatty acid-CoA ligase VraA (vraA) (Staphylococcus epidermidis (strain ATCC 35984 / DSM 28319 / BCRC 17069 / CCUG 31568 / BM 3577 / RP62A)).